The chain runs to 205 residues: MSNAEAQASSDHTAPGKADTAPAHNPEADRLRALLEPSVLANRLYLEDVVINVAGSHRVVHVVVDLPQEETGGVSLDVIADISKVLSDALDNDPGADTRPYDLEVSSPGVGRPLTEPRHWHRAKGRIATVKVIQGENVTGRIQSVDDGGVTLVPEIAVKKGMKPKQGDPVKLPFDRIRTGKVEIEFSHLSEDGLEPEHNGPSEEA.

Residues 1 to 12 (MSNAEAQASSDH) show a composition bias toward polar residues. Disordered regions lie at residues 1-24 (MSNAEAQASSDHTAPGKADTAPAH) and 186-205 (FSHLSEDGLEPEHNGPSEEA).

This sequence belongs to the RimP family.

It localises to the cytoplasm. In terms of biological role, required for maturation of 30S ribosomal subunits. The polypeptide is Ribosome maturation factor RimP (Pseudarthrobacter chlorophenolicus (strain ATCC 700700 / DSM 12829 / CIP 107037 / JCM 12360 / KCTC 9906 / NCIMB 13794 / A6) (Arthrobacter chlorophenolicus)).